A 361-amino-acid polypeptide reads, in one-letter code: Outer membrane protein P2 (361 aa).

An N-terminal signal peptide occupies residues 1 to 20; it reads MKKTLAALIVGAFAASAANA.

It belongs to the Gram-negative porin family. In terms of assembly, homotrimer.

It is found in the cell outer membrane. Its function is as follows. Forms pores that allow passive diffusion of small molecules across the outer membrane. The chain is Outer membrane protein P2 (ompP2) from Haemophilus influenzae.